The primary structure comprises 566 residues: Beta-1,2-xylosyltransferease XAX1 (566 aa).

The segment at M1 to P25 is disordered. Over M1–G43 the chain is Cytoplasmic. The helical; Signal-anchor for type II membrane protein transmembrane segment at L44 to I64 threads the bilayer. Topologically, residues Y65–Q566 are lumenal. N74 carries N-linked (GlcNAc...) asparagine glycosylation. The tract at residues L78–C180 is disordered. The segment covering P84–P94 has biased composition (pro residues). N-linked (GlcNAc...) asparagine glycans are attached at residues N104, N368, N429, N515, and N549.

This sequence belongs to the glycosyltransferase 61 family. Highly expressed in young panicles.

It is found in the golgi apparatus membrane. Its pathway is glycan metabolism. Functionally, glycosyltransferase involved in the xylosylation of xylan, the major hemicellulose (non-cellulosic component) of primary and secondary walls of angiosperms. Possesses beta-1,2-xylosyltransferase activity, transferring xylose from UDP-xylose to the xylan backbone. The polypeptide is Beta-1,2-xylosyltransferease XAX1 (Oryza sativa subsp. japonica (Rice)).